Reading from the N-terminus, the 91-residue chain is Long neurotoxin OH-37 (91 aa).

The signal sequence occupies residues 1-21 (MKTLLLTLVVMTIVCLDLGYS). Disulfide bonds link Cys-24–Cys-41, Cys-34–Cys-62, Cys-47–Cys-51, Cys-66–Cys-77, and Cys-78–Cys-83.

This sequence belongs to the three-finger toxin family. Long-chain subfamily. Type II alpha-neurotoxin sub-subfamily. As to expression, expressed by the venom gland.

The protein resides in the secreted. Binds with high affinity to muscular (alpha-1/CHRNA1) and neuronal (alpha-7/CHRNA7) nicotinic acetylcholine receptor (nAChR) and inhibits acetylcholine from binding to the receptor, thereby impairing neuromuscular and neuronal transmission. This Ophiophagus hannah (King cobra) protein is Long neurotoxin OH-37.